Here is a 161-residue protein sequence, read N- to C-terminus: Nucleotide-binding protein PFL_4775 (161 aa).

This sequence belongs to the YajQ family.

Functionally, nucleotide-binding protein. In Pseudomonas fluorescens (strain ATCC BAA-477 / NRRL B-23932 / Pf-5), this protein is Nucleotide-binding protein PFL_4775.